Reading from the N-terminus, the 395-residue chain is Calreticulin (395 aa).

The N-terminal stretch at 1–15 (MKSLCLLAIVAVVSA) is a signal peptide. A disulfide bond links cysteine 101 and cysteine 133. An alpha-D-glucoside-binding residues include tyrosine 105, lysine 107, tyrosine 124, and aspartate 131. Repeat copies occupy residues 186-197 (AQTGSLEEDWDL), 205-216 (DPDAKKPEDWDE), 222-233 (DAEDAKPEDWEK), 239-250 (DPDAKKPEDWDD), 254-264 (GEWEPPMIDNP), 268-278 (GEWKPKQIKNP), and 282-292 (GKWIHPEIENP). The segment at 186 to 250 (AQTGSLEEDW…DAKKPEDWDD (65 aa)) is 4 X approximate repeats. Positions 193-301 (EDWDLLPAKK…PEYTPDDELY (109 aa)) are P-domain. Residues 202-212 (KIKDPDAKKPE) show a composition bias toward basic and acidic residues. The segment at 202–255 (KIKDPDAKKPEDWDEREYIDDAEDAKPEDWEKPEHIPDPDAKKPEDWDDEMDGE) is disordered. Positions 213–224 (DWDEREYIDDAE) are enriched in acidic residues. A compositionally biased stretch (basic and acidic residues) spans 225–246 (DAKPEDWEKPEHIPDPDAKKPE). The tract at residues 254–292 (GEWEPPMIDNPEYKGEWKPKQIKNPAYKGKWIHPEIENP) is 3 X approximate repeats. A C-domain region spans residues 302 to 395 (SYESWGAIGF…KEEEEGHDEL (94 aa)). Residue aspartate 312 participates in an alpha-D-glucoside binding. Over residues 340-380 (ETFDKLKTVEKEKKEKADEETRKAEEEARKKAEEEKEAKKD) the composition is skewed to basic and acidic residues. The tract at residues 340 to 395 (ETFDKLKTVEKEKKEKADEETRKAEEEARKKAEEEKEAKKDDDEEEKEEEEGHDEL) is disordered. Acidic residues predominate over residues 381-395 (DDEEEKEEEEGHDEL). A Prevents secretion from ER motif is present at residues 392-395 (HDEL).

Belongs to the calreticulin family. Cleaved by caspase ced-3 in vitro.

Its subcellular location is the endoplasmic reticulum lumen. Functionally, molecular calcium-binding chaperone promoting folding, oligomeric assembly and quality control in the endoplasmic reticulum (ER) via the calreticulin/calnexin cycle. This lectin may interact transiently with almost all of the monoglucosylated glycoproteins that are synthesized in the ER. Probably by controlling the folding of extracellular matrix protein unc-52/Perlecan, may play a role in the formation of fibrous organelles, a hemidesmosome-like structure attaching muscles to the epidermis. Protects dopaminergic neurons against oxidative stress-induced neurodegeneration. May play a role in protection against ER stress. Plays a role in modulating lifespan, acting by influencing ER calcium homeostasis. This Caenorhabditis elegans protein is Calreticulin (crt-1).